Consider the following 511-residue polypeptide: Histidine ammonia-lyase 2 (511 aa).

Residues 144–146 (SSG) constitute a cross-link (5-imidazolinone (Ser-Gly)). 2,3-didehydroalanine (Ser) is present on Ser145.

This sequence belongs to the PAL/histidase family. In terms of processing, contains an active site 4-methylidene-imidazol-5-one (MIO), which is formed autocatalytically by cyclization and dehydration of residues Ser-Ser-Gly.

It is found in the cytoplasm. It carries out the reaction L-histidine = trans-urocanate + NH4(+). Its pathway is amino-acid degradation; L-histidine degradation into L-glutamate; N-formimidoyl-L-glutamate from L-histidine: step 1/3. The sequence is that of Histidine ammonia-lyase 2 (hutH2) from Fusobacterium nucleatum subsp. nucleatum (strain ATCC 25586 / DSM 15643 / BCRC 10681 / CIP 101130 / JCM 8532 / KCTC 2640 / LMG 13131 / VPI 4355).